Consider the following 151-residue polypeptide: Ubiquitin-conjugating enzyme E2 2 (151 aa).

A disordered region spans residues 1–26 (MSTTARRRLMRDFKRMQQDPPQGVSA). Residues 4–150 (TARRRLMRDF…VRDTVEASWT (147 aa)) enclose the UBC core domain. Cysteine 88 (glycyl thioester intermediate) is an active-site residue.

The protein belongs to the ubiquitin-conjugating enzyme family.

Its subcellular location is the cytoplasm. It is found in the nucleus. The catalysed reaction is S-ubiquitinyl-[E1 ubiquitin-activating enzyme]-L-cysteine + [E2 ubiquitin-conjugating enzyme]-L-cysteine = [E1 ubiquitin-activating enzyme]-L-cysteine + S-ubiquitinyl-[E2 ubiquitin-conjugating enzyme]-L-cysteine.. It participates in protein modification; protein ubiquitination. Catalyzes the covalent attachment of ubiquitin to other proteins. Plays a role in transcription regulation by catalyzing the monoubiquitination of histone H2B to form H2BK123ub1. H2BK123ub1 gives a specific tag for epigenetic transcriptional activation and is also a prerequisite for H3K4me and H3K79me formation. Also involved in postreplication repair of UV-damaged DNA, in N-end rule-dependent protein degradation and in sporulation. This Yarrowia lipolytica (strain CLIB 122 / E 150) (Yeast) protein is Ubiquitin-conjugating enzyme E2 2 (UBC2).